Consider the following 433-residue polypeptide: Elongation factor 1-alpha (433 aa).

In terms of domain architecture, tr-type G spans 5–220 (KPHINVVFIG…ALDMLKPPQL (216 aa)). Residues 14–21 (GHVDHGKS) form a G1 region. 14–21 (GHVDHGKS) lines the GTP pocket. A Mg(2+)-binding site is contributed by serine 21. The interval 70–74 (GVTID) is G2. Residues 91–94 (DAPG) are G3. Residues 91 to 95 (DAPGH) and 146 to 149 (NKMD) each bind GTP. The segment at 146–149 (NKMD) is G4. Residues 186–188 (ASF) form a G5 region.

It belongs to the TRAFAC class translation factor GTPase superfamily. Classic translation factor GTPase family. EF-Tu/EF-1A subfamily.

The protein resides in the cytoplasm. It catalyses the reaction GTP + H2O = GDP + phosphate + H(+). Its function is as follows. GTP hydrolase that promotes the GTP-dependent binding of aminoacyl-tRNA to the A-site of ribosomes during protein biosynthesis. This chain is Elongation factor 1-alpha, found in Nanoarchaeum equitans (strain Kin4-M).